The chain runs to 270 residues: 5-deoxy-glucuronate isomerase (270 aa).

This sequence belongs to the isomerase IolB family.

It catalyses the reaction 5-deoxy-D-glucuronate = 5-dehydro-2-deoxy-D-gluconate. It participates in polyol metabolism; myo-inositol degradation into acetyl-CoA; acetyl-CoA from myo-inositol: step 4/7. Its function is as follows. Involved in the isomerization of 5-deoxy-glucuronate (5DG) to 5-dehydro-2-deoxy-D-gluconate (DKG or 2-deoxy-5-keto-D-gluconate). The polypeptide is 5-deoxy-glucuronate isomerase (Halalkalibacterium halodurans (strain ATCC BAA-125 / DSM 18197 / FERM 7344 / JCM 9153 / C-125) (Bacillus halodurans)).